The primary structure comprises 464 residues: tRNA modification GTPase MnmE (464 aa).

Residues Arg-25, Glu-87, and Lys-130 each coordinate (6S)-5-formyl-5,6,7,8-tetrahydrofolate. The TrmE-type G domain maps to Gly-226–Gly-386. Asn-236 provides a ligand contact to K(+). GTP-binding positions include Asn-236–Ser-241, Thr-255–Thr-261, and Asp-280–Gly-283. Mg(2+) is bound at residue Ser-240. The K(+) site is built by Thr-255, Ile-257, and Thr-260. Position 261 (Thr-261) interacts with Mg(2+). Lys-464 provides a ligand contact to (6S)-5-formyl-5,6,7,8-tetrahydrofolate.

Belongs to the TRAFAC class TrmE-Era-EngA-EngB-Septin-like GTPase superfamily. TrmE GTPase family. As to quaternary structure, homodimer. Heterotetramer of two MnmE and two MnmG subunits. The cofactor is K(+).

Its subcellular location is the cytoplasm. In terms of biological role, exhibits a very high intrinsic GTPase hydrolysis rate. Involved in the addition of a carboxymethylaminomethyl (cmnm) group at the wobble position (U34) of certain tRNAs, forming tRNA-cmnm(5)s(2)U34. This chain is tRNA modification GTPase MnmE, found in Paraburkholderia xenovorans (strain LB400).